Consider the following 270-residue polypeptide: Phosphatidylinositol transfer protein alpha isoform (270 aa).

Thr58, Lys60, Glu85, Asn89, Thr96, and Lys194 together coordinate a 1,2-diacyl-sn-glycero-3-phospho-(1D-myo-inositol). Residue Lys215 is modified to N6-acetyllysine.

This sequence belongs to the PtdIns transfer protein family. PI transfer class I subfamily. Phosphorylated by PKC in a calcium and phosphatidylserine-dependent manner.

The protein resides in the cytoplasm. Its subcellular location is the nucleus. It carries out the reaction a 1,2-diacyl-sn-glycero-3-phosphocholine(in) = a 1,2-diacyl-sn-glycero-3-phosphocholine(out). The catalysed reaction is a 1,2-diacyl-sn-glycero-3-phospho-(1D-myo-inositol)(in) = a 1,2-diacyl-sn-glycero-3-phospho-(1D-myo-inositol)(out). Its function is as follows. Catalyzes the transfer of phosphatidylinositol (PI) and phosphatidylcholine (PC) between membranes. Shows a preference for PI and PC containing shorter saturated or monosaturated acyl chains at the sn-1 and sn-2 positions. Preference order for PC is C16:1 &gt; C16:0 &gt; C18:1 &gt; C18:0 &gt; C20:4 and for PI is C16:1 &gt; C16:0 &gt; C18:1 &gt; C18:0 &gt; C20:4 &gt; C20:3. In Bos taurus (Bovine), this protein is Phosphatidylinositol transfer protein alpha isoform (PITPNA).